We begin with the raw amino-acid sequence, 639 residues long: Eukaryotic translation initiation factor 2-alpha kinase 2 (639 aa).

Residues 171 to 588 (FEEYSLLGRG…LEVLNCGLLL (418 aa)) enclose the Protein kinase domain. Residues 177-185 (LGRGGFGSV) and Lys200 contribute to the ATP site. Low complexity predominate over residues 298–320 (ISTSRKSSYSSTTESSNFENLES). The interval 298-322 (ISTSRKSSYSSTTESSNFENLESPR) is disordered. Residue Asp417 is the Proton acceptor of the active site.

This sequence belongs to the protein kinase superfamily. Ser/Thr protein kinase family. GCN2 subfamily. Autophosphorylated.

The catalysed reaction is L-seryl-[protein] + ATP = O-phospho-L-seryl-[protein] + ADP + H(+). The enzyme catalyses L-threonyl-[protein] + ATP = O-phospho-L-threonyl-[protein] + ADP + H(+). In terms of biological role, mediates down-regulation of protein synthesis in response to stress conditions by the phosphorylation of the alpha subunit of eIF-2 (tif211) on 'Ser-52'. Protein synthesis is inhibited at the level of initiation. Activity is inhibited in the presence of heme. In Schizosaccharomyces pombe (strain 972 / ATCC 24843) (Fission yeast), this protein is Eukaryotic translation initiation factor 2-alpha kinase 2 (hri2).